A 151-amino-acid polypeptide reads, in one-letter code: Transcriptional regulator MraZ (151 aa).

2 consecutive SpoVT-AbrB domains span residues 5-52 (ANAI…PLSE) and 81-124 (AVDL…DEDA).

It belongs to the MraZ family. In terms of assembly, forms oligomers.

It is found in the cytoplasm. It localises to the nucleoid. The protein is Transcriptional regulator MraZ of Pseudomonas savastanoi pv. phaseolicola (strain 1448A / Race 6) (Pseudomonas syringae pv. phaseolicola (strain 1448A / Race 6)).